Here is a 200-residue protein sequence, read N- to C-terminus: MIASVRGVVTATGPDHAVLEVGGVGLAVQCAPGTIADLRVGQPARLATSLVVREDSLTLYGFADDDAKALFELLQTASGVGPRLAQAVLAVHPPEAVRAAIANADTAALTRVPGIGKKGAERLVLELRDRIGPVPVGADSAAGVTTGAWPEQVRQALVGLGWTAAQADQAVTAVAETVDGAVPPVPVLLRQAIRLLGRTR.

Residues 1–63 (MIASVRGVVT…EDSLTLYGFA (63 aa)) form a domain I region. Positions 64–142 (DDDAKALFEL…PVPVGADSAA (79 aa)) are domain II. The flexible linker stretch occupies residues 143-151 (GVTTGAWPE). The segment at 151 to 200 (EQVRQALVGLGWTAAQADQAVTAVAETVDGAVPPVPVLLRQAIRLLGRTR) is domain III.

Belongs to the RuvA family. As to quaternary structure, homotetramer. Forms an RuvA(8)-RuvB(12)-Holliday junction (HJ) complex. HJ DNA is sandwiched between 2 RuvA tetramers; dsDNA enters through RuvA and exits via RuvB. An RuvB hexamer assembles on each DNA strand where it exits the tetramer. Each RuvB hexamer is contacted by two RuvA subunits (via domain III) on 2 adjacent RuvB subunits; this complex drives branch migration. In the full resolvosome a probable DNA-RuvA(4)-RuvB(12)-RuvC(2) complex forms which resolves the HJ.

The protein localises to the cytoplasm. Its function is as follows. The RuvA-RuvB-RuvC complex processes Holliday junction (HJ) DNA during genetic recombination and DNA repair, while the RuvA-RuvB complex plays an important role in the rescue of blocked DNA replication forks via replication fork reversal (RFR). RuvA specifically binds to HJ cruciform DNA, conferring on it an open structure. The RuvB hexamer acts as an ATP-dependent pump, pulling dsDNA into and through the RuvAB complex. HJ branch migration allows RuvC to scan DNA until it finds its consensus sequence, where it cleaves and resolves the cruciform DNA. The sequence is that of Holliday junction branch migration complex subunit RuvA from Salinispora tropica (strain ATCC BAA-916 / DSM 44818 / JCM 13857 / NBRC 105044 / CNB-440).